The following is a 121-amino-acid chain: Large ribosomal subunit protein uL18 (121 aa).

Belongs to the universal ribosomal protein uL18 family. Part of the 50S ribosomal subunit; part of the 5S rRNA/L5/L18/L25 subcomplex. Contacts the 5S and 23S rRNAs.

Its function is as follows. This is one of the proteins that bind and probably mediate the attachment of the 5S RNA into the large ribosomal subunit, where it forms part of the central protuberance. This Delftia acidovorans (strain DSM 14801 / SPH-1) protein is Large ribosomal subunit protein uL18.